The sequence spans 326 residues: tRNA U34 carboxymethyltransferase (326 aa).

Carboxy-S-adenosyl-L-methionine-binding positions include lysine 95, tryptophan 109, lysine 114, glycine 134, 184–185 (VE), tyrosine 204, and arginine 319.

It belongs to the class I-like SAM-binding methyltransferase superfamily. CmoB family.

The enzyme catalyses carboxy-S-adenosyl-L-methionine + 5-hydroxyuridine(34) in tRNA = 5-carboxymethoxyuridine(34) in tRNA + S-adenosyl-L-homocysteine + H(+). Its function is as follows. Catalyzes carboxymethyl transfer from carboxy-S-adenosyl-L-methionine (Cx-SAM) to 5-hydroxyuridine (ho5U) to form 5-carboxymethoxyuridine (cmo5U) at position 34 in tRNAs. This is tRNA U34 carboxymethyltransferase from Trichodesmium erythraeum (strain IMS101).